Here is a 412-residue protein sequence, read N- to C-terminus: UDP-galactose transporter homolog 1 (412 aa).

The chain crosses the membrane as a helical span at residues 3-23; sequence VLRLAVCISGVYAAFLLWAIA. The segment at 31 to 51 is disordered; sequence FPSVHPHPHQQPHSPSDPPPG. The next 4 helical transmembrane spans lie at 58 to 78, 139 to 159, 197 to 217, and 222 to 242; these read LFLNFAQALASSLSALCYLSF, LLALLVQVSVFQTIASPIGFL, YIVVALVTVGISMFMLFAETS, and GGSDSMWGLVLLLVNLLIDGL. Residue asparagine 244 is glycosylated (N-linked (GlcNAc...) asparagine). 4 helical membrane-spanning segments follow: residues 262–282, 325–345, 355–375, and 379–399; these read MMFTMALTTQIILLPLLVLPL, SALAPLFAYALLGGLGQLFIF, TLVMVTVTRKLFTMLLSVVVF, and LTKGQWLGVGVVFAGIGVEAG.

The protein belongs to the nucleotide-sugar transporter family. SLC35B subfamily.

The protein localises to the endoplasmic reticulum membrane. In terms of biological role, may be involved in specific transport of UDP-Gal from the cytosol to the Golgi lumen. Involved in the maintenance of optimal conditions for the folding of secretory pathway proteins in the endoplasmic reticulum. The protein is UDP-galactose transporter homolog 1 (HUT1-A) of Cryptococcus neoformans var. neoformans serotype D (strain JEC21 / ATCC MYA-565) (Filobasidiella neoformans).